Reading from the N-terminus, the 125-residue chain is uncharacterized protein (125 aa).

Residues 100–120 traverse the membrane as a helical segment; sequence YFKVAFALAVLTPLAIWIFYI.

The protein resides in the membrane. This is an uncharacterized protein from Saccharomyces cerevisiae (strain ATCC 204508 / S288c) (Baker's yeast).